Reading from the N-terminus, the 608-residue chain is MSAASSLAPQRYMQDMGGASNASDVLEELKNRFGPPGTDNPGGPMGVVQKTGDDLPTQWVSRNRVHEVLHYLKLKAERPYRMLYDLTAIDERTRVHREDQPASRFTVIYHLLSFERNADVCLKVALTDTDLRMPTITDIWPAANWYEREIWDMFGIVFDGHPHLRRILLPPWWQGHALRKDHPARATEMEPFHLSTEKEEAEQETLRFHPEEWGMRRTHDGTDFMFLNLGPNHPSVHGVFRIVLQLDGEEIIDAVPEIGFHHRGAEKMGERQSWHTYIPYTDRIDYLGGVMNNLPYVLAVEKLAGIEVPDRVKVMRVMMAEFFRIASHLVFYGTFTQDLGALSPVFFMFTDRERVFDVVEAICGGRMHPSWYRIGGVAQDLPNGWDRMVRDFLDYMPARLDEYDKIAVGNRILKARTRGVGGYSIDEAIEWGVTGPNLRACGFEWDFRKARPYSGYDQFEFDVPTGQHGDCYDRCAVRVQEIRQSLRIIDQCLENMPAGAHKADHPLTTPPLKKHTLHDIETLIDHFLGVSWGPVIPPGEAFVGIEATKGNNGYYLISDGNTTAYRVRIRTPSFPHLQMIPLISRGLMISDLIAILGSIDFVMADVDR.

The segment at 1–199 (MSAASSLAPQ…EPFHLSTEKE (199 aa)) is NADH dehydrogenase I subunit C. An NADH dehydrogenase I subunit D region spans residues 223–608 (DFMFLNLGPN…IDFVMADVDR (386 aa)).

The protein in the N-terminal section; belongs to the complex I 30 kDa subunit family. In the C-terminal section; belongs to the complex I 49 kDa subunit family. In terms of assembly, NDH-1 is composed of 13 different subunits. Subunits NuoB, CD, E, F, and G constitute the peripheral sector of the complex.

It localises to the cell inner membrane. The enzyme catalyses a quinone + NADH + 5 H(+)(in) = a quinol + NAD(+) + 4 H(+)(out). NDH-1 shuttles electrons from NADH, via FMN and iron-sulfur (Fe-S) centers, to quinones in the respiratory chain. The immediate electron acceptor for the enzyme in this species is believed to be ubiquinone. Couples the redox reaction to proton translocation (for every two electrons transferred, four hydrogen ions are translocated across the cytoplasmic membrane), and thus conserves the redox energy in a proton gradient. This Nitrosospira multiformis (strain ATCC 25196 / NCIMB 11849 / C 71) protein is NADH-quinone oxidoreductase subunit C/D.